The chain runs to 665 residues: Transketolase 1 (665 aa).

Residue histidine 26 coordinates substrate. Residues histidine 66 and 114–116 contribute to the thiamine diphosphate site; that span reads GPL. Mg(2+) is bound at residue aspartate 155. Thiamine diphosphate-binding residues include glycine 156 and asparagine 185. Positions 185 and 187 each coordinate Mg(2+). Residues histidine 261, arginine 358, and serine 385 each coordinate substrate. Residue histidine 261 participates in thiamine diphosphate binding. Glutamate 412 serves as the catalytic Proton donor. Phenylalanine 438 contacts thiamine diphosphate. Positions 462, 470, and 521 each coordinate substrate.

Belongs to the transketolase family. Homodimer. Mg(2+) serves as cofactor. The cofactor is Ca(2+). It depends on Mn(2+) as a cofactor. Co(2+) is required as a cofactor. Requires thiamine diphosphate as cofactor.

The enzyme catalyses D-sedoheptulose 7-phosphate + D-glyceraldehyde 3-phosphate = aldehydo-D-ribose 5-phosphate + D-xylulose 5-phosphate. Functionally, catalyzes the transfer of a two-carbon ketol group from a ketose donor to an aldose acceptor, via a covalent intermediate with the cofactor thiamine pyrophosphate. This chain is Transketolase 1 (tkt1), found in Vibrio cholerae serotype O1 (strain ATCC 39315 / El Tor Inaba N16961).